A 371-amino-acid polypeptide reads, in one-letter code: Putative glutamate--cysteine ligase 2 (371 aa).

The protein belongs to the glutamate--cysteine ligase type 2 family. YbdK subfamily. Homodimer.

It catalyses the reaction L-cysteine + L-glutamate + ATP = gamma-L-glutamyl-L-cysteine + ADP + phosphate + H(+). Its function is as follows. ATP-dependent carboxylate-amine ligase which exhibits weak glutamate--cysteine ligase activity. The polypeptide is Putative glutamate--cysteine ligase 2 (Cronobacter sakazakii (strain ATCC BAA-894) (Enterobacter sakazakii)).